The following is a 204-amino-acid chain: Small ribosomal subunit protein uS4 (204 aa).

The S4 RNA-binding domain occupies Arg-92–Ile-153.

It belongs to the universal ribosomal protein uS4 family. As to quaternary structure, part of the 30S ribosomal subunit. Contacts protein S5. The interaction surface between S4 and S5 is involved in control of translational fidelity.

Functionally, one of the primary rRNA binding proteins, it binds directly to 16S rRNA where it nucleates assembly of the body of the 30S subunit. In terms of biological role, with S5 and S12 plays an important role in translational accuracy. In Streptomyces coelicolor (strain ATCC BAA-471 / A3(2) / M145), this protein is Small ribosomal subunit protein uS4.